We begin with the raw amino-acid sequence, 276 residues long: Cholesterol 25-hydroxylase-like protein 1, member 2 (276 aa).

N30 is a glycosylation site (N-linked (GlcNAc...) asparagine). Helical transmembrane passes span 39 to 59 (LFPV…YLSC), 90 to 110 (GVTL…QWMW), and 126 to 146 (LVGG…IWHF). Residues 134–265 (LLLFDLQYFI…FSHWDKMFGT (132 aa)) enclose the Fatty acid hydroxylase domain. Positions 144–148 (WHFLH) match the Histidine box-1 motif. Residues 159 to 163 (HAIHH) carry the Histidine box-2 motif. N164 carries N-linked (GlcNAc...) asparagine glycosylation. Transmembrane regions (helical) follow at residues 175–195 (CLGG…PVLL) and 199–219 (LLTT…DHCG). The short motif at 240–246 (KHDVHHQ) is the Histidine box-3 element.

The protein belongs to the sterol desaturase family. The cofactor is Fe cation.

The protein localises to the endoplasmic reticulum membrane. May catalyze the formation of 25-hydroxycholesterol from cholesterol. In Danio rerio (Zebrafish), this protein is Cholesterol 25-hydroxylase-like protein 1, member 2.